Reading from the N-terminus, the 134-residue chain is MKPSERRKARRLAVQAIYSWQLSQNKVADVEHEFLTEQNTDGVDVAYFRELLTGVASKTSQIDELLKPHLDRKFEEVSPVEKAIVRLATYELTFRKDVPFKVAINEGIELAKAFGAEDSHKFVNGLLDKLVKHK.

The protein belongs to the NusB family.

Involved in transcription antitermination. Required for transcription of ribosomal RNA (rRNA) genes. Binds specifically to the boxA antiterminator sequence of the ribosomal RNA (rrn) operons. In Shewanella frigidimarina (strain NCIMB 400), this protein is Transcription antitermination protein NusB.